The following is a 309-amino-acid chain: Methionyl-tRNA formyltransferase (309 aa).

107-110 (SLLP) is a binding site for (6S)-5,6,7,8-tetrahydrofolate.

It belongs to the Fmt family.

The catalysed reaction is L-methionyl-tRNA(fMet) + (6R)-10-formyltetrahydrofolate = N-formyl-L-methionyl-tRNA(fMet) + (6S)-5,6,7,8-tetrahydrofolate + H(+). In terms of biological role, attaches a formyl group to the free amino group of methionyl-tRNA(fMet). The formyl group appears to play a dual role in the initiator identity of N-formylmethionyl-tRNA by promoting its recognition by IF2 and preventing the misappropriation of this tRNA by the elongation apparatus. This is Methionyl-tRNA formyltransferase from Borrelia duttonii (strain Ly).